We begin with the raw amino-acid sequence, 432 residues long: Adenosylhomocysteinase (432 aa).

N-acetylserine is present on Ser-2. Residues Thr-57, Asp-131, and Glu-156 each coordinate substrate. Ser-183 is modified (phosphoserine). The tract at residues 183 to 350 (SVTKSKFDNL…EGRLVNLGCA (168 aa)) is NAD binding. 2 residues coordinate substrate: Lys-186 and Asp-190. Lys-186 is modified (N6-(2-hydroxyisobutyryl)lysine). Tyr-193 carries the phosphotyrosine modification.

The protein belongs to the adenosylhomocysteinase family. In terms of assembly, homotetramer. Interaction with AHCYL1. The cofactor is NAD(+).

The protein resides in the cytoplasm. Its subcellular location is the melanosome. The protein localises to the nucleus. It is found in the endoplasmic reticulum. It carries out the reaction S-adenosyl-L-homocysteine + H2O = L-homocysteine + adenosine. It functions in the pathway amino-acid biosynthesis; L-homocysteine biosynthesis; L-homocysteine from S-adenosyl-L-homocysteine: step 1/1. In terms of biological role, catalyzes the hydrolysis of S-adenosyl-L-homocysteine to form adenosine and homocysteine. Binds copper ions. The chain is Adenosylhomocysteinase (AHCY) from Macaca fascicularis (Crab-eating macaque).